A 55-amino-acid chain; its full sequence is Small ribosomal subunit protein eS31 (55 aa).

Zn(2+)-binding residues include C26, C29, C44, and C47.

This sequence belongs to the eukaryotic ribosomal protein eS31 family. As to quaternary structure, part of the 30S ribosomal subunit. Requires Zn(2+) as cofactor.

In Archaeoglobus fulgidus (strain ATCC 49558 / DSM 4304 / JCM 9628 / NBRC 100126 / VC-16), this protein is Small ribosomal subunit protein eS31.